The primary structure comprises 380 residues: Cytochrome b (380 aa).

Helical transmembrane passes span 34-54 (FGSL…LLAM), 78-99 (WLIR…YLHI), 114-134 (WNTG…GYVL), and 179-199 (FFAL…IHLT). 2 residues coordinate heme b: histidine 84 and histidine 98. Residues histidine 183 and histidine 197 each coordinate heme b. An a ubiquinone-binding site is contributed by histidine 202. Helical transmembrane passes span 227–247 (LKDI…ALFS), 289–309 (LGGV…PLLH), 321–341 (LSQL…WVGS), and 348–368 (FIII…ILLP).

The protein belongs to the cytochrome b family. In terms of assembly, the cytochrome bc1 complex contains 11 subunits: 3 respiratory subunits (MT-CYB, CYC1 and UQCRFS1), 2 core proteins (UQCRC1 and UQCRC2) and 6 low-molecular weight proteins (UQCRH/QCR6, UQCRB/QCR7, UQCRQ/QCR8, UQCR10/QCR9, UQCR11/QCR10 and a cleavage product of UQCRFS1). This cytochrome bc1 complex then forms a dimer. Heme b serves as cofactor.

It is found in the mitochondrion inner membrane. Component of the ubiquinol-cytochrome c reductase complex (complex III or cytochrome b-c1 complex) that is part of the mitochondrial respiratory chain. The b-c1 complex mediates electron transfer from ubiquinol to cytochrome c. Contributes to the generation of a proton gradient across the mitochondrial membrane that is then used for ATP synthesis. In Pelagodroma marina (White-faced storm-petrel), this protein is Cytochrome b (MT-CYB).